The chain runs to 446 residues: Glucarate dehydratase (446 aa).

Substrate is bound by residues H32, T103, Y150, and K205. Catalysis depends on K207, which acts as the Proton acceptor. Positions 235, 266, and 289 each coordinate Mg(2+). 235-237 (DPN) contacts substrate. Substrate-binding positions include N289, 339 to 341 (HSN), H368, and R422. Catalysis depends on H339, which acts as the Proton acceptor.

This sequence belongs to the mandelate racemase/muconate lactonizing enzyme family. GlucD subfamily. As to quaternary structure, homodimer. Requires Mg(2+) as cofactor.

It catalyses the reaction D-glucarate = 5-dehydro-4-deoxy-D-glucarate + H2O. The protein operates within carbohydrate acid metabolism; D-glucarate degradation; 2,5-dioxopentanoate from D-glucarate: step 1/2. Its function is as follows. Catalyzes the dehydration of glucarate to 5-keto-4-deoxy-D-glucarate (5-kdGluc). Also acts on L-idarate. The protein is Glucarate dehydratase (gudD) of Escherichia coli O157:H7.